A 766-amino-acid polypeptide reads, in one-letter code: MASHIVGYPRMGPKRELKFALESFWDGKSSAEDLEKVATDLRASIWKQMADAGIKYIPSNTFSYYDQVLDTAAMLGAVPERYSWTGGEIGFSTYFSMARGNATVPAMEMTKWFDTNYHFIVPELGPNTKFSYSSHKAVNEYKEAKALGVDTVPVLVGPVSYLLLSKPAKGVEKSFALLSLLSSILPVYKEVIAELKAAGATWIQFDEPTLVLDLDSHQLAAFSAAYTELESALSGLNVLIETYFADIPAESYKTLTSLNSVTAYGFDLIRGAKTLDLIKSAGFPSGKYLFAGVVDGRNIWADDLAASLTTLESLEAIVGKDKLVVSTSCSLMHTAVDLVNETKLDSEIKSWLAFAAQKVVEVNALAKALAGQKDEAYFAANAAAQASRRSSPRVTNEEVQKAAAALKGSDHRRATNVSARLDAQQKKLNLPVLPTTTIGSFPQTVELRRVRREYKAKKISEEEYISAIKEEISKVVKIQEELDIDVLVHGEPERNDMVEYFGEQLSGFAFTANGWVQSYGSRCVKPPIIYGDVSRPNPMTVFWSKLAQSMTSRPMKGMLTGPVTILNWSFVRNDQPRFETCYQIALAIKKEVEDLEAGGIQVIQIDEAALREGLPLRKAEHAFYLDWAVHSFRITNCGVQDTTQIHTHMCYSNFNDIIHSIINMDADVITIENSRSDEKLLSVFREGVKYGAGIGPGVYDIHSPRIPSTEEIADRVNKMLAVLDTNILWVNPDCGLKTRKYNEVKPALTNMVSAAKLIRTQLASAK.

Positions 18 and 116 each coordinate 5-methyltetrahydropteroyltri-L-glutamate. Residues 438 to 440 (IGS) and glutamate 491 contribute to the L-homocysteine site. L-methionine-binding positions include 438 to 440 (IGS) and glutamate 491. Residues aspartate 496, tyrosine 519, 522–523 (RC), and tryptophan 568 each bind 5-methyltetrahydropteroyltri-L-glutamate. Aspartate 606 is a binding site for L-homocysteine. Aspartate 606 serves as a coordination point for L-methionine. The Zn(2+) site is built by histidine 648, cysteine 650, histidine 659, and glutamate 672. Histidine 702 serves as the catalytic Proton donor. Zn(2+) is bound at residue cysteine 734.

The protein belongs to the vitamin-B12 independent methionine synthase family. Zn(2+) is required as a cofactor.

It is found in the cytoplasm. The protein resides in the cytosol. The catalysed reaction is 5-methyltetrahydropteroyltri-L-glutamate + L-homocysteine = tetrahydropteroyltri-L-glutamate + L-methionine. It functions in the pathway amino-acid biosynthesis; L-methionine biosynthesis via de novo pathway; L-methionine from L-homocysteine (MetE route): step 1/1. Functionally, catalyzes the transfer of a methyl group from 5-methyltetrahydrofolate to homocysteine resulting in methionine formation. The chain is 5-methyltetrahydropteroyltriglutamate--homocysteine methyltransferase 1 from Oryza sativa subsp. japonica (Rice).